Here is a 277-residue protein sequence, read N- to C-terminus: Shikimate dehydrogenase (NADP(+)) (277 aa).

Shikimate-binding positions include 18 to 20 (SKS) and Thr-65. Catalysis depends on Lys-69, which acts as the Proton acceptor. Glu-81 lines the NADP(+) pocket. Shikimate-binding residues include Asn-90 and Asp-106. NADP(+) contacts are provided by residues 130 to 134 (GAGGA), 154 to 159 (NRTFSK), and Met-217. Tyr-219 contributes to the shikimate binding site. Residue Gly-241 coordinates NADP(+).

This sequence belongs to the shikimate dehydrogenase family. In terms of assembly, homodimer.

The catalysed reaction is shikimate + NADP(+) = 3-dehydroshikimate + NADPH + H(+). It functions in the pathway metabolic intermediate biosynthesis; chorismate biosynthesis; chorismate from D-erythrose 4-phosphate and phosphoenolpyruvate: step 4/7. Functionally, involved in the biosynthesis of the chorismate, which leads to the biosynthesis of aromatic amino acids. Catalyzes the reversible NADPH linked reduction of 3-dehydroshikimate (DHSA) to yield shikimate (SA). The protein is Shikimate dehydrogenase (NADP(+)) of Vibrio vulnificus (strain CMCP6).